Consider the following 263-residue polypeptide: Small ribosomal subunit protein eS4 (263 aa).

Residues 42–104 (LPLIIFLRNR…TGEHFRLVYD (63 aa)) form the S4 RNA-binding domain.

It belongs to the eukaryotic ribosomal protein eS4 family. Component of the small ribosomal subunit.

It localises to the cytoplasm. Its function is as follows. Component of the small ribosomal subunit. The ribosome is a large ribonucleoprotein complex responsible for the synthesis of proteins in the cell. The protein is Small ribosomal subunit protein eS4 (rps4) of Xenopus laevis (African clawed frog).